Here is a 108-residue protein sequence, read N- to C-terminus: RNA silencing suppressor (108 aa).

The segment at 47–50 (RRRR) is basic. The C4-type zinc finger occupies 57–78 (CHRCYRLWPPTVFTTRCDNKYC).

The protein belongs to the carlaviruses nucleic acid-binding protein family.

Functionally, suppressor of viral-induced RNA silencing. The potential mechanism of action is based on sequestering siRNAs. The chain is RNA silencing suppressor from Solanum tuberosum (Potato).